The chain runs to 595 residues: UvrABC system protein C (595 aa).

Residues 14–91 (SNPGCYLHKD…IQENMPKFNI (78 aa)) enclose the GIY-YIG domain. A UVR domain is found at 196–231 (DKIVNQLKAKMKDMSDQMAFERAAEYRDLIEAVSTL).

The protein belongs to the UvrC family. In terms of assembly, interacts with UvrB in an incision complex.

The protein localises to the cytoplasm. In terms of biological role, the UvrABC repair system catalyzes the recognition and processing of DNA lesions. UvrC both incises the 5' and 3' sides of the lesion. The N-terminal half is responsible for the 3' incision and the C-terminal half is responsible for the 5' incision. This Streptococcus thermophilus (strain ATCC BAA-491 / LMD-9) protein is UvrABC system protein C.